The following is a 233-amino-acid chain: Transcriptional regulatory protein PrrA (233 aa).

Residues 9–123 (RVLVVDDDSD…ELVARVKALL (115 aa)) enclose the Response regulatory domain. Position 58 is a 4-aspartylphosphate (Asp58). The ompR/PhoB-type DNA-binding region spans 134–232 (SETITVGPLE…VRGVGFVLRM (99 aa)).

In terms of processing, phosphorylated by PrrB at Asp-58.

Its subcellular location is the cytoplasm. Member of the two-component regulatory system PrrB/PrrA that is involved specifically in early intracellular multiplication of Mycobacterium and is essential for its viability. Upon phosphorylation by PrrB, functions as a transcription regulator by direct binding to promoter regions of target genes to positively regulate their expression. Autoregulates its own expression. This is Transcriptional regulatory protein PrrA (prrA) from Mycobacterium bovis (strain ATCC BAA-935 / AF2122/97).